Consider the following 91-residue polypeptide: Small ribosomal subunit protein bS18 (91 aa).

It belongs to the bacterial ribosomal protein bS18 family. As to quaternary structure, part of the 30S ribosomal subunit. Forms a tight heterodimer with protein bS6.

In terms of biological role, binds as a heterodimer with protein bS6 to the central domain of the 16S rRNA, where it helps stabilize the platform of the 30S subunit. The chain is Small ribosomal subunit protein bS18 from Burkholderia lata (strain ATCC 17760 / DSM 23089 / LMG 22485 / NCIMB 9086 / R18194 / 383).